A 190-amino-acid chain; its full sequence is Protein GrpE (190 aa).

Over residues 1–31 (MTETPNTSSEEIQTSEPSSDNELQTLQQENA) the composition is skewed to polar residues. The disordered stretch occupies residues 1–34 (MTETPNTSSEEIQTSEPSSDNELQTLQQENANLK).

It belongs to the GrpE family. Homodimer.

It is found in the cytoplasm. Participates actively in the response to hyperosmotic and heat shock by preventing the aggregation of stress-denatured proteins, in association with DnaK and GrpE. It is the nucleotide exchange factor for DnaK and may function as a thermosensor. Unfolded proteins bind initially to DnaJ; upon interaction with the DnaJ-bound protein, DnaK hydrolyzes its bound ATP, resulting in the formation of a stable complex. GrpE releases ADP from DnaK; ATP binding to DnaK triggers the release of the substrate protein, thus completing the reaction cycle. Several rounds of ATP-dependent interactions between DnaJ, DnaK and GrpE are required for fully efficient folding. The sequence is that of Protein GrpE from Chlamydia muridarum (strain MoPn / Nigg).